The sequence spans 249 residues: MVSFDATEALAPYREGRGYGAILFDRERLRQADASLFSPQSWGDRARPVDAGGRGGAWFVDAPFGHSVLRQYLRGGMAARVSRDRYLWKGAGRTRSFAEFRLMRELIKRKLPVPRPLAACYLREGLGYRAALLMERLENVRSLAEHAQVAGRGAPWEATGQLIARFHRAGLDHADLNAHNILFDAGGHGWLIDFDRGVLRIPATRWRERNLKRLHRSLLKLRGNRSREDVDKDYARLHRAYELAWGRGY.

Residue D175 is part of the active site.

Belongs to the protein kinase superfamily. KdkA/RfaP family.

It localises to the cell inner membrane. The catalysed reaction is an alpha-Kdo-(2-&gt;6)-lipid IVA + ATP = a 4-O-phospho-alpha-Kdo-(2-&gt;6)-lipid IVA + ADP + H(+). It participates in bacterial outer membrane biogenesis; LPS core biosynthesis. Its function is as follows. Catalyzes the ATP-dependent phosphorylation of the 3-deoxy-D-manno-octulosonic acid (Kdo) residue in Kdo-lipid IV(A) at the 4-OH position. The chain is 3-deoxy-D-manno-octulosonic acid kinase from Xanthomonas axonopodis pv. citri (strain 306).